Consider the following 188-residue polypeptide: Protein GrpE (188 aa).

The span at 1-22 (MEENKQNQNLNTEETTEQQTEA) shows a compositional bias: low complexity. Positions 1-26 (MEENKQNQNLNTEETTEQQTEAETVE) are disordered.

Belongs to the GrpE family. In terms of assembly, homodimer.

It is found in the cytoplasm. Functionally, participates actively in the response to hyperosmotic and heat shock by preventing the aggregation of stress-denatured proteins, in association with DnaK and GrpE. It is the nucleotide exchange factor for DnaK and may function as a thermosensor. Unfolded proteins bind initially to DnaJ; upon interaction with the DnaJ-bound protein, DnaK hydrolyzes its bound ATP, resulting in the formation of a stable complex. GrpE releases ADP from DnaK; ATP binding to DnaK triggers the release of the substrate protein, thus completing the reaction cycle. Several rounds of ATP-dependent interactions between DnaJ, DnaK and GrpE are required for fully efficient folding. The protein is Protein GrpE of Exiguobacterium sibiricum (strain DSM 17290 / CCUG 55495 / CIP 109462 / JCM 13490 / 255-15).